Reading from the N-terminus, the 248-residue chain is UDP-2,3-diacylglucosamine hydrolase (248 aa).

The Mn(2+) site is built by D7, H9, D40, N78, and H113. N78–R79 contacts substrate. Residues D121, S159, T163, K166, and H194 each coordinate substrate. Mn(2+) is bound by residues H194 and H196.

This sequence belongs to the LpxH family. The cofactor is Mn(2+).

It is found in the cell inner membrane. It catalyses the reaction UDP-2-N,3-O-bis[(3R)-3-hydroxytetradecanoyl]-alpha-D-glucosamine + H2O = 2-N,3-O-bis[(3R)-3-hydroxytetradecanoyl]-alpha-D-glucosaminyl 1-phosphate + UMP + 2 H(+). It participates in glycolipid biosynthesis; lipid IV(A) biosynthesis; lipid IV(A) from (3R)-3-hydroxytetradecanoyl-[acyl-carrier-protein] and UDP-N-acetyl-alpha-D-glucosamine: step 4/6. Its function is as follows. Hydrolyzes the pyrophosphate bond of UDP-2,3-diacylglucosamine to yield 2,3-diacylglucosamine 1-phosphate (lipid X) and UMP by catalyzing the attack of water at the alpha-P atom. Involved in the biosynthesis of lipid A, a phosphorylated glycolipid that anchors the lipopolysaccharide to the outer membrane of the cell. The protein is UDP-2,3-diacylglucosamine hydrolase of Pseudomonas savastanoi pv. phaseolicola (strain 1448A / Race 6) (Pseudomonas syringae pv. phaseolicola (strain 1448A / Race 6)).